Consider the following 716-residue polypeptide: FLYWCH-type zinc finger-containing protein 1 (716 aa).

The segment at M1–K35 is disordered. S21 carries the post-translational modification Phosphoserine. Residues F116–H174 form an FLYWCH-type 1 zinc finger. Residue K134 forms a Glycyl lysine isopeptide (Lys-Gly) (interchain with G-Cter in SUMO2) linkage. The disordered stretch occupies residues P191–T231. Residues L195 to G204 are compositionally biased toward low complexity. Phosphoserine is present on S261. Residues F273–H331 form an FLYWCH-type 2 zinc finger. Phosphoserine is present on S371. The tract at residues G377–F421 is disordered. Residue K393 forms a Glycyl lysine isopeptide (Lys-Gly) (interchain with G-Cter in SUMO2) linkage. The FLYWCH-type 3 zinc finger occupies F421 to H479. S503 bears the Phosphoserine mark. Residues F509–H567 form an FLYWCH-type 4 zinc finger. Position 591 is a phosphoserine (S591). Residues F600–H658 form an FLYWCH-type 5 zinc finger. K685 participates in a covalent cross-link: Glycyl lysine isopeptide (Lys-Gly) (interchain with G-Cter in SUMO2). S696 carries the phosphoserine modification.

Interacts with CTNNB1 (when unphosphorylated), perhaps preventing interaction of CTNNB1 with TCF4, and thereby regulating transcription activation; phosphorylation of CTNNB1 may inhibit the interaction.

Its subcellular location is the nucleus. The protein localises to the chromosome. It localises to the centromere. Its function is as follows. Transcription cofactor. Negatively regulates transcription activation by catenin beta-1 CTNNB1, perhaps acting by competing with TCF4 for CTNNB1 binding. May play a role in DNA-damage response signaling. Binds specifically to DNA sequences at peri-centromeric chromatin loci. The chain is FLYWCH-type zinc finger-containing protein 1 (FLYWCH1) from Homo sapiens (Human).